Reading from the N-terminus, the 22-residue chain is Putative lactoylglutathione lyase (22 aa).

Residues 1 to 22 (ITACLDPDGWKEPGPLPGISTK) form a disordered region. E12 functions as the Proton donor/acceptor in the catalytic mechanism.

The protein belongs to the glyoxalase I family. The cofactor is Zn(2+).

It catalyses the reaction (R)-S-lactoylglutathione = methylglyoxal + glutathione. The protein operates within secondary metabolite metabolism; methylglyoxal degradation; (R)-lactate from methylglyoxal: step 1/2. Catalyzes the conversion of hemimercaptal, formed from methylglyoxal and glutathione, to S-lactoylglutathione. This is Putative lactoylglutathione lyase from Pinus strobus (Eastern white pine).